A 212-amino-acid polypeptide reads, in one-letter code: External core antigen (212 aa).

An N-terminal signal peptide occupies residues 1–19; that stretch reads MQLFHLCLIISCTCPTVQA. Residues 25-27 are HBEAG; that stretch reads GWL. The tract at residues 165-212 is disordered; sequence NAPILSTLPETTVVRRRGRSPRRRTPSPRRRRSQSPRRRRSQSRESQC. Basic residues predominate over residues 178 to 205; the sequence is VRRRGRSPRRRTPSPRRRRSQSPRRRRS. A 1; half-length repeat occupies 184 to 190; it reads SPRRRTP. A 3 X 8 AA repeats of S-P-R-R-R-R-S-Q region spans residues 184-206; the sequence is SPRRRTPSPRRRRSQSPRRRRSQ. The propeptide occupies 184 to 212; that stretch reads SPRRRTPSPRRRRSQSPRRRRSQSRESQC. 2 consecutive repeat copies span residues 191-198 and 199-206.

This sequence belongs to the orthohepadnavirus precore antigen family. As to quaternary structure, homodimerizes. Post-translationally, phosphorylated. Cleaved by host furin.

The protein localises to the secreted. It localises to the host nucleus. Its function is as follows. May regulate immune response to the intracellular capsid in acting as a T-cell tolerogen, by having an immunoregulatory effect which prevents destruction of infected cells by cytotoxic T-cells. This immune regulation may predispose to chronicity during perinatal infections and prevent severe liver injury during adult infections. This is External core antigen from Hepatitis B virus genotype D subtype ayw (isolate Italy/CI/1992) (HBV-D).